A 100-amino-acid polypeptide reads, in one-letter code: Urease subunit gamma (100 aa).

This sequence belongs to the urease gamma subunit family. Heterotrimer of UreA (gamma), UreB (beta) and UreC (alpha) subunits. Three heterotrimers associate to form the active enzyme.

The protein localises to the cytoplasm. It carries out the reaction urea + 2 H2O + H(+) = hydrogencarbonate + 2 NH4(+). Its pathway is nitrogen metabolism; urea degradation; CO(2) and NH(3) from urea (urease route): step 1/1. This is Urease subunit gamma from Photorhabdus laumondii subsp. laumondii (strain DSM 15139 / CIP 105565 / TT01) (Photorhabdus luminescens subsp. laumondii).